Reading from the N-terminus, the 481-residue chain is MFVTAYLAFIVLAGLCVALEITARRLTLSQATQTAVANPAFQRFQKLFLKAYLLALWADWLQGPYLYKLYRHYNFLESQIAILYVCGLASCVLFAPVAGWLPQFLGRRQTCLLFCLAYSVCCITKLSQDYFMLILGRVLGGLSTSLLTTTFEAWYVHGHVDIHDFPKEWIPVTFGKVANWNYGLAVGAGLVANLFAEWLGLGPVAPFLLAIPSLAACAWFVLSEWGQEDKQEGMNGDKNAPLLNSLNTPKLQLSARARFWRSCVDGLRCLLSDRRVMLLGGVQALFESVLYIFVFLWTPVLDPHGPPLGIVFSSLMAATMAGSTLFRLATSAPYRLQPGHLLCLAILLAFFSFFMLTFSTVPGQPRPRESLLAFLLLELACGLYFPAVSFLQGRVVPVERRAAVLAWFRLPLHLLACLGLLALHGEVSGSGAGEAGSGTRHMFAGCAGMMLAALLAVISLFTVGRNDADLRLEGPKLEGEI.

12 helical membrane passes run 1–21, 47–67, 80–100, 131–151, 180–200, 201–221, 276–296, 306–326, 341–361, 371–391, 403–423, and 443–463; these read MFVTAYLAFIVLAGLCVALEI, LFLKAYLLALWADWLQGPYLY, IAILYVCGLASCVLFAPVAGW, FMLILGRVLGGLSTSLLTTTF, WNYGLAVGAGLVANLFAEWLG, LGPVAPFLLAIPSLAACAWFV, VMLLGGVQALFESVLYIFVFL, PPLGIVFSSLMAATMAGSTLF, LLCLAILLAFFSFFMLTFSTV, LLAFLLLELACGLYFPAVSFL, AVLAWFRLPLHLLACLGLLAL, and FAGCAGMMLAALLAVISLFTV.

Belongs to the major facilitator superfamily.

It is found in the cell membrane. Its function is as follows. Mediates high-affinity intracellular uptake of the rare oligo-element molybdenum. The chain is Molybdate-anion transporter (mfsd5) from Danio rerio (Zebrafish).